A 249-amino-acid polypeptide reads, in one-letter code: Small ribosomal subunit protein uS2 (249 aa).

Belongs to the universal ribosomal protein uS2 family.

The chain is Small ribosomal subunit protein uS2 from Chlorobaculum tepidum (strain ATCC 49652 / DSM 12025 / NBRC 103806 / TLS) (Chlorobium tepidum).